The following is a 449-amino-acid chain: MSVWQQGATIELRIDSLSHTGEGVGRWQDRVVFVADTVPGDRLRVRLTHVKRQYAHGKVLEVVQPSGQRVRPNCIVADKCGGCQWQRVAYATQLAAKEQLVKDAIARIGHLEPQAFLPILAAPNPFGYRNKVTYPLGRRHGAVVAGYYQKGSHHLVNLNQCPVQDPRLNPLLAALKQALQPWPIYREQTHEPGFRHLGLRIGQRTGEQLITLVLAGPLPAGLAAEAEGWLQRFQGVIGVCVNFNHHVGNRIFGDETQVLAGRPYLWEEMAGVRFQIASTTFFQVNTAQAEQLVTTLRDWIAPTGQERLVDLYCGVGTLSLPLAGAVAEVIGVEVHSASVQQAIANAQHNGINNAHFVCAKAEEWLPRYDQAVDVLILDPPRKGCDRAVLDAILHNCPPRLLYVSCHPATLARDLAHLCSTGTYQLAKIQPLDMFPQTAHVETIALLTTS.

A TRAM domain is found at 3-61; it reads VWQQGATIELRIDSLSHTGEGVGRWQDRVVFVADTVPGDRLRVRLTHVKRQYAHGKVLE. 4 residues coordinate [4Fe-4S] cluster: cysteine 74, cysteine 80, cysteine 83, and cysteine 161. The S-adenosyl-L-methionine site is built by glutamine 283, tyrosine 312, glutamate 333, and aspartate 378. The Nucleophile role is filled by cysteine 405.

Belongs to the class I-like SAM-binding methyltransferase superfamily. RNA M5U methyltransferase family.

This is an uncharacterized protein from Thermosynechococcus vestitus (strain NIES-2133 / IAM M-273 / BP-1).